The chain runs to 43 residues: uncharacterized protein (43 aa).

The segment covering 1-37 (MIIKNNNNNNNNNNNNNNNNNNNNNNNNNNNNNNNNN) has biased composition (low complexity). The segment at 1–43 (MIIKNNNNNNNNNNNNNNNNNNNNNNNNNNNNNNNNNIEIIIK) is disordered.

This is an uncharacterized protein from Dictyostelium discoideum (Social amoeba).